A 299-amino-acid chain; its full sequence is tRNA dimethylallyltransferase (299 aa).

Residue 5 to 12 (GPTASGKT) participates in ATP binding. 7 to 12 (TASGKT) is a substrate binding site. Interaction with substrate tRNA regions lie at residues 30-33 (DSAL), 154-158 (QRLSR), and 235-240 (RCVGYR).

The protein belongs to the IPP transferase family. Monomer. Mg(2+) is required as a cofactor.

The catalysed reaction is adenosine(37) in tRNA + dimethylallyl diphosphate = N(6)-dimethylallyladenosine(37) in tRNA + diphosphate. In terms of biological role, catalyzes the transfer of a dimethylallyl group onto the adenine at position 37 in tRNAs that read codons beginning with uridine, leading to the formation of N6-(dimethylallyl)adenosine (i(6)A). The chain is tRNA dimethylallyltransferase from Shewanella denitrificans (strain OS217 / ATCC BAA-1090 / DSM 15013).